We begin with the raw amino-acid sequence, 370 residues long: Anthranilate phosphoribosyltransferase (370 aa).

The disordered stretch occupies residues 1-27; sequence MALSAEGSSGGSRGGSPKAEAASVPSW. 5-phospho-alpha-D-ribose 1-diphosphate-binding positions include glycine 107, 110–111, threonine 115, 117–120, 135–143, and glycine 147; these read GD, NLST, and KHGNRAASS. Glycine 107 is an anthranilate binding site. Residue serine 119 coordinates Mg(2+). Anthranilate is bound at residue asparagine 138. Residue arginine 193 participates in anthranilate binding. Positions 251 and 252 each coordinate Mg(2+).

The protein belongs to the anthranilate phosphoribosyltransferase family. As to quaternary structure, homodimer. The cofactor is Mg(2+).

The enzyme catalyses N-(5-phospho-beta-D-ribosyl)anthranilate + diphosphate = 5-phospho-alpha-D-ribose 1-diphosphate + anthranilate. It participates in amino-acid biosynthesis; L-tryptophan biosynthesis; L-tryptophan from chorismate: step 2/5. Catalyzes the transfer of the phosphoribosyl group of 5-phosphorylribose-1-pyrophosphate (PRPP) to anthranilate to yield N-(5'-phosphoribosyl)-anthranilate (PRA). In Mycobacterium bovis (strain ATCC BAA-935 / AF2122/97), this protein is Anthranilate phosphoribosyltransferase.